We begin with the raw amino-acid sequence, 459 residues long: Phosphomethylpyrimidine synthase (459 aa).

Substrate is bound by residues Asn80, Met109, Tyr139, His175, 195 to 197 (SRG), 236 to 239 (DSLR), and Glu275. His279 provides a ligand contact to Zn(2+). Position 302 (Tyr302) interacts with substrate. Zn(2+) is bound at residue His343. Cys423, Cys426, and Cys431 together coordinate [4Fe-4S] cluster.

This sequence belongs to the ThiC family. The cofactor is [4Fe-4S] cluster.

It catalyses the reaction 5-amino-1-(5-phospho-beta-D-ribosyl)imidazole + S-adenosyl-L-methionine = 4-amino-2-methyl-5-(phosphooxymethyl)pyrimidine + CO + 5'-deoxyadenosine + formate + L-methionine + 3 H(+). It functions in the pathway cofactor biosynthesis; thiamine diphosphate biosynthesis. Functionally, catalyzes the synthesis of the hydroxymethylpyrimidine phosphate (HMP-P) moiety of thiamine from aminoimidazole ribotide (AIR) in a radical S-adenosyl-L-methionine (SAM)-dependent reaction. The sequence is that of Phosphomethylpyrimidine synthase from Prochlorococcus marinus (strain MIT 9303).